The sequence spans 403 residues: TBC1 domain family member 20 (403 aa).

Residues 1–25 (MALRSAQGDGPTSGHWDGGAEKADF) form a disordered region. One can recognise a Rab-GAP TBC domain in the interval 60-246 (LLTDEIRRKV…RLYDFFLACH (187 aa)). The next 2 membrane-spanning stretches (helical) occupy residues 238–258 (LYDF…AVIV) and 367–387 (FVKL…LAVV).

As to quaternary structure, (Microbial infection) Directly interacts with the N-terminal amphipathic helix of hepatitis C virus (HCV) NS5A.

The protein resides in the membrane. GTPase-activating protein (GAP) specific for Rab1 and Rab2 small GTPase families for which it can accelerate the intrinsic GTP hydrolysis rate by more than five orders of magnitude. Also shows GAP activity for RAB18 GTPase. Promotes RAB18 dissociation from the endoplasmic reticulum (ER) membrane into the cytosol, probably through stimulating RAB18 GTP-hydrolysis. Involved in maintaining endoplasmic reticulum structure. In Homo sapiens (Human), this protein is TBC1 domain family member 20.